Reading from the N-terminus, the 671-residue chain is DNA ligase (671 aa).

NAD(+)-binding positions include 32–36 (DAEYD), 81–82 (SL), and glutamate 113. Lysine 115 functions as the N6-AMP-lysine intermediate in the catalytic mechanism. Positions 136, 173, 290, and 314 each coordinate NAD(+). Residues cysteine 408, cysteine 411, cysteine 426, and cysteine 432 each coordinate Zn(2+). In terms of domain architecture, BRCT spans 593-671 (EIDSPFAGKT…EAEMLRLLGS (79 aa)).

Belongs to the NAD-dependent DNA ligase family. LigA subfamily. The cofactor is Mg(2+). It depends on Mn(2+) as a cofactor.

It carries out the reaction NAD(+) + (deoxyribonucleotide)n-3'-hydroxyl + 5'-phospho-(deoxyribonucleotide)m = (deoxyribonucleotide)n+m + AMP + beta-nicotinamide D-nucleotide.. DNA ligase that catalyzes the formation of phosphodiester linkages between 5'-phosphoryl and 3'-hydroxyl groups in double-stranded DNA using NAD as a coenzyme and as the energy source for the reaction. It is essential for DNA replication and repair of damaged DNA. This chain is DNA ligase, found in Escherichia coli (strain ATCC 8739 / DSM 1576 / NBRC 3972 / NCIMB 8545 / WDCM 00012 / Crooks).